The sequence spans 419 residues: Ribosome biogenesis protein WDR12 homolog (419 aa).

The tract at residues 10–91 is ubiquitin-like (UBL) domain; that stretch reads VQVHLKTKQE…EDSIEIEYVE (82 aa). WD repeat units lie at residues 103-140, 142-184, 191-230, 249-287, 289-328, 334-374, and 378-416; these read LHDD…KLTI, GHTA…NAVE, GHER…AGES, GHRE…IKTE, STNK…GSVV, GHNA…APLY, and GHGE…VENM.

This sequence belongs to the WD repeat WDR12/YTM1 family.

It is found in the nucleus. It localises to the nucleolus. Its subcellular location is the nucleoplasm. Functionally, required for maturation of ribosomal RNAs and formation of the large ribosomal subunit. The sequence is that of Ribosome biogenesis protein WDR12 homolog from Drosophila mojavensis (Fruit fly).